The following is a 619-amino-acid chain: Schlafen family member 12-like (619 aa).

The chain crosses the membrane as a helical span at residues 598-618 (IFLFVCLFRFCLFVCLFVFFL).

This sequence belongs to the Schlafen family.

Its subcellular location is the membrane. The sequence is that of Schlafen family member 12-like (SLFN12L) from Pongo abelii (Sumatran orangutan).